Reading from the N-terminus, the 572-residue chain is Proline--tRNA ligase (572 aa).

Belongs to the class-II aminoacyl-tRNA synthetase family. ProS type 1 subfamily. Homodimer.

The protein localises to the cytoplasm. It carries out the reaction tRNA(Pro) + L-proline + ATP = L-prolyl-tRNA(Pro) + AMP + diphosphate. Functionally, catalyzes the attachment of proline to tRNA(Pro) in a two-step reaction: proline is first activated by ATP to form Pro-AMP and then transferred to the acceptor end of tRNA(Pro). As ProRS can inadvertently accommodate and process non-cognate amino acids such as alanine and cysteine, to avoid such errors it has two additional distinct editing activities against alanine. One activity is designated as 'pretransfer' editing and involves the tRNA(Pro)-independent hydrolysis of activated Ala-AMP. The other activity is designated 'posttransfer' editing and involves deacylation of mischarged Ala-tRNA(Pro). The misacylated Cys-tRNA(Pro) is not edited by ProRS. The chain is Proline--tRNA ligase from Haemophilus influenzae (strain PittGG).